A 318-amino-acid polypeptide reads, in one-letter code: Aspartate carbamoyltransferase catalytic subunit (318 aa).

Residues R54 and T55 each coordinate carbamoyl phosphate. Residue K82 participates in L-aspartate binding. The carbamoyl phosphate site is built by R104, H134, and Q137. R174 and R230 together coordinate L-aspartate. 2 residues coordinate carbamoyl phosphate: G271 and P272.

The protein belongs to the aspartate/ornithine carbamoyltransferase superfamily. ATCase family. As to quaternary structure, heterododecamer (2C3:3R2) of six catalytic PyrB chains organized as two trimers (C3), and six regulatory PyrI chains organized as three dimers (R2).

It carries out the reaction carbamoyl phosphate + L-aspartate = N-carbamoyl-L-aspartate + phosphate + H(+). Its pathway is pyrimidine metabolism; UMP biosynthesis via de novo pathway; (S)-dihydroorotate from bicarbonate: step 2/3. Catalyzes the condensation of carbamoyl phosphate and aspartate to form carbamoyl aspartate and inorganic phosphate, the committed step in the de novo pyrimidine nucleotide biosynthesis pathway. This Clavibacter sepedonicus (Clavibacter michiganensis subsp. sepedonicus) protein is Aspartate carbamoyltransferase catalytic subunit.